The following is a 403-amino-acid chain: Methylthioribose-1-phosphate isomerase (403 aa).

Asp277 functions as the Proton donor in the catalytic mechanism.

Belongs to the eIF-2B alpha/beta/delta subunits family. MtnA subfamily.

It is found in the cytoplasm. It localises to the nucleus. It catalyses the reaction 5-(methylsulfanyl)-alpha-D-ribose 1-phosphate = 5-(methylsulfanyl)-D-ribulose 1-phosphate. The protein operates within amino-acid biosynthesis; L-methionine biosynthesis via salvage pathway; L-methionine from S-methyl-5-thio-alpha-D-ribose 1-phosphate: step 1/6. In terms of biological role, catalyzes the interconversion of methylthioribose-1-phosphate (MTR-1-P) into methylthioribulose-1-phosphate (MTRu-1-P). The protein is Methylthioribose-1-phosphate isomerase of Lodderomyces elongisporus (strain ATCC 11503 / CBS 2605 / JCM 1781 / NBRC 1676 / NRRL YB-4239) (Yeast).